Reading from the N-terminus, the 338-residue chain is Tetraacyldisaccharide 4'-kinase (338 aa).

Position 63 to 70 (Thr-63 to Thr-70) interacts with ATP.

Belongs to the LpxK family.

The enzyme catalyses a lipid A disaccharide + ATP = a lipid IVA + ADP + H(+). Its pathway is glycolipid biosynthesis; lipid IV(A) biosynthesis; lipid IV(A) from (3R)-3-hydroxytetradecanoyl-[acyl-carrier-protein] and UDP-N-acetyl-alpha-D-glucosamine: step 6/6. Its function is as follows. Transfers the gamma-phosphate of ATP to the 4'-position of a tetraacyldisaccharide 1-phosphate intermediate (termed DS-1-P) to form tetraacyldisaccharide 1,4'-bis-phosphate (lipid IVA). The chain is Tetraacyldisaccharide 4'-kinase from Shewanella loihica (strain ATCC BAA-1088 / PV-4).